The chain runs to 693 residues: Elongation factor G (693 aa).

Residues 8-282 (EKTRNIGIMA…AVVDYLPSPL (275 aa)) enclose the tr-type G domain. Residues 17-24 (AHVDAGKT), 81-85 (DTPGH), and 135-138 (NKMD) contribute to the GTP site.

The protein belongs to the TRAFAC class translation factor GTPase superfamily. Classic translation factor GTPase family. EF-G/EF-2 subfamily.

The protein localises to the cytoplasm. Catalyzes the GTP-dependent ribosomal translocation step during translation elongation. During this step, the ribosome changes from the pre-translocational (PRE) to the post-translocational (POST) state as the newly formed A-site-bound peptidyl-tRNA and P-site-bound deacylated tRNA move to the P and E sites, respectively. Catalyzes the coordinated movement of the two tRNA molecules, the mRNA and conformational changes in the ribosome. The sequence is that of Elongation factor G from Streptococcus mutans serotype c (strain ATCC 700610 / UA159).